The chain runs to 133 residues: NADPH-dependent 7-cyano-7-deazaguanine reductase (133 aa).

The active-site Thioimide intermediate is the cysteine 49. Aspartate 56 functions as the Proton donor in the catalytic mechanism. Substrate contacts are provided by residues 71–73 (IEL) and 90–91 (HE).

This sequence belongs to the GTP cyclohydrolase I family. QueF type 1 subfamily.

The protein localises to the cytoplasm. It carries out the reaction 7-aminomethyl-7-carbaguanine + 2 NADP(+) = 7-cyano-7-deazaguanine + 2 NADPH + 3 H(+). Its pathway is tRNA modification; tRNA-queuosine biosynthesis. Its function is as follows. Catalyzes the NADPH-dependent reduction of 7-cyano-7-deazaguanine (preQ0) to 7-aminomethyl-7-deazaguanine (preQ1). This Leptospira borgpetersenii serovar Hardjo-bovis (strain JB197) protein is NADPH-dependent 7-cyano-7-deazaguanine reductase.